Here is a 1070-residue protein sequence, read N- to C-terminus: DNA-directed RNA polymerase subunit beta (1070 aa).

The protein belongs to the RNA polymerase beta chain family. In plastids the minimal PEP RNA polymerase catalytic core is composed of four subunits: alpha, beta, beta', and beta''. When a (nuclear-encoded) sigma factor is associated with the core the holoenzyme is formed, which can initiate transcription.

Its subcellular location is the plastid. The protein resides in the chloroplast. It carries out the reaction RNA(n) + a ribonucleoside 5'-triphosphate = RNA(n+1) + diphosphate. Its function is as follows. DNA-dependent RNA polymerase catalyzes the transcription of DNA into RNA using the four ribonucleoside triphosphates as substrates. The sequence is that of DNA-directed RNA polymerase subunit beta from Chloranthus spicatus (Chulantree).